Here is a 343-residue protein sequence, read N- to C-terminus: Alpha-tocopherol transfer protein-like (343 aa).

Residues 1–29 (MSEESDSLRTSPSVASLSENELPLPPPDP) are disordered. The span at 8–19 (LRTSPSVASLSE) shows a compositional bias: polar residues. Positions 118 to 283 (RPSALKDVLN…EYGGTAGELD (166 aa)) constitute a CRAL-TRIO domain.

Functionally, may act as a protein that binds a hydrophobic ligand. This Mus musculus (Mouse) protein is Alpha-tocopherol transfer protein-like (Ttpal).